Here is a 557-residue protein sequence, read N- to C-terminus: DNA ligase (557 aa).

Glutamate 251 lines the ATP pocket. Lysine 253 functions as the N6-AMP-lysine intermediate in the catalytic mechanism. ATP contacts are provided by arginine 258, arginine 273, glutamate 303, phenylalanine 342, arginine 418, and lysine 424.

The protein belongs to the ATP-dependent DNA ligase family. The cofactor is Mg(2+).

The catalysed reaction is ATP + (deoxyribonucleotide)n-3'-hydroxyl + 5'-phospho-(deoxyribonucleotide)m = (deoxyribonucleotide)n+m + AMP + diphosphate.. Its function is as follows. DNA ligase that seals nicks in double-stranded DNA during DNA replication, DNA recombination and DNA repair. The sequence is that of DNA ligase from Methanosphaera stadtmanae (strain ATCC 43021 / DSM 3091 / JCM 11832 / MCB-3).